Reading from the N-terminus, the 456-residue chain is Probable glycine dehydrogenase (decarboxylating) subunit 1 (456 aa).

This sequence belongs to the GcvP family. N-terminal subunit subfamily. In terms of assembly, the glycine cleavage system is composed of four proteins: P, T, L and H. In this organism, the P 'protein' is a heterodimer of two subunits.

It catalyses the reaction N(6)-[(R)-lipoyl]-L-lysyl-[glycine-cleavage complex H protein] + glycine + H(+) = N(6)-[(R)-S(8)-aminomethyldihydrolipoyl]-L-lysyl-[glycine-cleavage complex H protein] + CO2. Functionally, the glycine cleavage system catalyzes the degradation of glycine. The P protein binds the alpha-amino group of glycine through its pyridoxal phosphate cofactor; CO(2) is released and the remaining methylamine moiety is then transferred to the lipoamide cofactor of the H protein. The chain is Probable glycine dehydrogenase (decarboxylating) subunit 1 from Legionella pneumophila (strain Corby).